Consider the following 331-residue polypeptide: Ketol-acid reductoisomerase (NADP(+)) (331 aa).

Residues 3 to 183 (AQMYYDDDAD…GGTRAGALKT (181 aa)) enclose the KARI N-terminal Rossmann domain. NADP(+)-binding positions include 26–29 (YGSQ), S52, and S54. H109 is an active-site residue. Position 135 (G135) interacts with NADP(+). The KARI C-terminal knotted domain occupies 184 to 329 (TFKEETETDL…TELRSLMSWL (146 aa)). Mg(2+) contacts are provided by D192, E196, E228, and E232. Substrate is bound at residue S253.

The protein belongs to the ketol-acid reductoisomerase family. The cofactor is Mg(2+).

It catalyses the reaction (2R)-2,3-dihydroxy-3-methylbutanoate + NADP(+) = (2S)-2-acetolactate + NADPH + H(+). The enzyme catalyses (2R,3R)-2,3-dihydroxy-3-methylpentanoate + NADP(+) = (S)-2-ethyl-2-hydroxy-3-oxobutanoate + NADPH + H(+). Its pathway is amino-acid biosynthesis; L-isoleucine biosynthesis; L-isoleucine from 2-oxobutanoate: step 2/4. The protein operates within amino-acid biosynthesis; L-valine biosynthesis; L-valine from pyruvate: step 2/4. Involved in the biosynthesis of branched-chain amino acids (BCAA). Catalyzes an alkyl-migration followed by a ketol-acid reduction of (S)-2-acetolactate (S2AL) to yield (R)-2,3-dihydroxy-isovalerate. In the isomerase reaction, S2AL is rearranged via a Mg-dependent methyl migration to produce 3-hydroxy-3-methyl-2-ketobutyrate (HMKB). In the reductase reaction, this 2-ketoacid undergoes a metal-dependent reduction by NADPH to yield (R)-2,3-dihydroxy-isovalerate. In Thermobifida fusca (strain YX), this protein is Ketol-acid reductoisomerase (NADP(+)).